We begin with the raw amino-acid sequence, 84 residues long: Succinate dehydrogenase membrane anchor subunit (84 aa).

The Mitochondrial matrix portion of the chain corresponds to 1–3 (MIT). Residues 4-24 (FQWLIVRVVALFISLTILIDI) traverse the membrane as a helical segment. Residues 25 to 31 (EMFVVML) lie on the Mitochondrial intermembrane side of the membrane. A helical transmembrane segment spans residues 32 to 52 (SFLIIHISIGLKAIIHDYIHF). A heme-binding site is contributed by H37. Position 49 (Y49) interacts with a ubiquinone. Topologically, residues 53–58 (QKIKLM) are mitochondrial matrix. Residues 59–81 (LLILLRVSAIEISRSFRTFYIII) traverse the membrane as a helical segment. At 82–84 (KNT) the chain is on the mitochondrial intermembrane side.

In terms of assembly, part of an enzyme complex containing four subunits: a flavoprotein, an iron-sulfur protein, plus two membrane-anchoring proteins. Requires heme as cofactor.

The protein resides in the mitochondrion inner membrane. It functions in the pathway carbohydrate metabolism; tricarboxylic acid cycle. Membrane-anchoring subunit of succinate dehydrogenase (SDH). The protein is Succinate dehydrogenase membrane anchor subunit (SDH4) of Chondrus crispus (Carrageen Irish moss).